The primary structure comprises 195 residues: dITP/XTP pyrophosphatase (195 aa).

Residue 8 to 13 (SNNQGK) participates in substrate binding. Positions 39 and 68 each coordinate Mg(2+). Residue aspartate 68 is the Proton acceptor of the active site. Substrate is bound by residues serine 69, 149 to 152 (FGYD), lysine 172, and 177 to 178 (HR).

This sequence belongs to the HAM1 NTPase family. In terms of assembly, homodimer. Mg(2+) is required as a cofactor.

The catalysed reaction is XTP + H2O = XMP + diphosphate + H(+). The enzyme catalyses dITP + H2O = dIMP + diphosphate + H(+). It carries out the reaction ITP + H2O = IMP + diphosphate + H(+). In terms of biological role, pyrophosphatase that catalyzes the hydrolysis of nucleoside triphosphates to their monophosphate derivatives, with a high preference for the non-canonical purine nucleotides XTP (xanthosine triphosphate), dITP (deoxyinosine triphosphate) and ITP. Seems to function as a house-cleaning enzyme that removes non-canonical purine nucleotides from the nucleotide pool, thus preventing their incorporation into DNA/RNA and avoiding chromosomal lesions. This Staphylococcus aureus (strain COL) protein is dITP/XTP pyrophosphatase.